Consider the following 289-residue polypeptide: ATP synthase gamma chain (289 aa).

Belongs to the ATPase gamma chain family. As to quaternary structure, F-type ATPases have 2 components, CF(1) - the catalytic core - and CF(0) - the membrane proton channel. CF(1) has five subunits: alpha(3), beta(3), gamma(1), delta(1), epsilon(1). CF(0) has three main subunits: a, b and c.

The protein resides in the cell inner membrane. In terms of biological role, produces ATP from ADP in the presence of a proton gradient across the membrane. The gamma chain is believed to be important in regulating ATPase activity and the flow of protons through the CF(0) complex. This Pasteurella multocida (strain Pm70) protein is ATP synthase gamma chain.